The primary structure comprises 417 residues: MSLSNKLTLDKLDVKGKRVVMRVDFNVPMKNNQITNNQRIKAAVPSIKFCLDNGAKSVVLMSHLGRPDGVPMPDKYSLEPVAVELKSLLGKDVLFLKDCVGPEVEKACANPAAGSVILLENLRFHVEEEGKGKDASGNKVKAEPAKIEAFRASLSKLGDVYVNDAFGTAHRAHSSMVGVNLPQKAGGFLMKKELNYFAKALESPERPFLAILGGAKVADKIQLINNMLDKVNEMIIGGGMAFTFLKVLNNMEIGTSLFDEEGAKIVKDLMSKAEKNGVKITLPVDFVTADKFDENAKTGQATVASGIPAGWMGLDCGPESSKKYAEAVTRAKQIVWNGPVGVFEWEAFAQGTKALMDEVVKATSRGCITIIGGGDTATCCAKWNTEDKVSHVSTGGGASLELLEGKVLPGVDALSNI.

Ser2 carries the N-acetylserine modification. A phosphoserine mark is found at Ser2 and Ser4. N6-succinyllysine is present on Lys6. N6-acetyllysine is present on Lys11. (2R)-3-phosphoglycerate is bound by residues Val23, Asp24, Phe25, Asn26, Gln38, and Arg39. Residues 38-43 (QRIKAA) form a mitochondrial targeting region exposed following cis-trans isomerization by PIN1 and recognized by the TOM complex for mitochondrial translocation of the protein region. Lys48 carries the N6-acetyllysine; alternate modification. The residue at position 48 (Lys48) is an N6-succinyllysine; alternate. Ser62, His63, Gly65, and Arg66 together coordinate (2R)-3-phosphoglycerate. N6-acetyllysine is present on Lys75. Residue Tyr76 is modified to Phosphotyrosine. N6-acetyllysine occurs at positions 86 and 91. The residue at position 97 (Lys97) is an N6-acetyllysine; alternate. Lys97 is subject to N6-(2-hydroxyisobutyryl)lysine; alternate. Residues Leu122 and Arg123 each coordinate (2R)-3-phosphoglycerate. Lys131 is subject to N6-acetyllysine; alternate. Residue Lys131 is modified to N6-malonyllysine; alternate. Position 146 is an N6-acetyllysine (Lys146). The (2R)-3-phosphoglycerate site is built by His170 and Arg171. At Lys191 the chain carries N6-succinyllysine. Phosphotyrosine is present on Tyr196. Lys199 is modified (N6-acetyllysine). Ser203 carries the phosphoserine modification. Gly214 serves as a coordination point for ADP. Gly214 provides a ligand contact to CDP. 2 residues coordinate AMP: Ala215 and Lys216. ATP is bound at residue Ala215. A Mg(2+)-binding site is contributed by Ala215. Residue Lys216 is modified to N6-(2-hydroxyisobutyryl)lysine. Mg(2+) is bound by residues Ala218 and Asp219. Asp219 is a binding site for CDP. Lys220 contributes to the AMP binding site. Lys220 lines the ATP pocket. Lys220 carries the N6-(2-hydroxyisobutyryl)lysine modification. Gly238 is an ADP binding site. CDP is bound at residue Gly238. Position 239 (Gly239) interacts with AMP. Residue Gly239 coordinates ATP. N6-acetyllysine occurs at positions 267 and 291. Gly313 lines the AMP pocket. Gly313 is an ATP binding site. The residue at position 323 (Lys323) is an N6-(2-hydroxyisobutyryl)lysine. 3 residues coordinate CDP: Gly338, Val340, and Phe343. Phe343 serves as a coordination point for ADP. Residue Glu344 coordinates AMP. Glu344 contacts ATP. Lys361 carries the post-translational modification N6-acetyllysine. ATP-binding residues include Asp375 and Thr376. Asp375 is a Mg(2+) binding site.

Belongs to the phosphoglycerate kinase family. As to quaternary structure, monomer. Interacts with kinase MAPK1/ERK2; the interaction is direct, occurs under hypoxic conditions, and promotes its interaction with PIN1. Interacts with peptidyl-prolyl cis-trans isomerase PIN1; the interaction is direct, occurs under hypoxic conditions, and targets the protein to the mitochondrion by promoting interactions with the TOM complex. Interacts with mitochondrial circRNA mcPGK1 (via its 2nd stem-loop); the interaction is direct and targets the protein to the mitochondrion by promoting interactions with the TOM complex. Interacts with pyruvate dehydrogenase kinase PDK1; the interaction is direct, occurs under hypoxic conditions and leads to PDK1-mediated inhibition of pyruvate dehydrogenase complex activity. The cofactor is Mg(2+). In terms of processing, phosphorylated at Ser-203 by MAPK1/ERK2 under hypoxic conditions, which promotes its mitochondrial targeting.

It is found in the cytoplasm. Its subcellular location is the cytosol. It localises to the mitochondrion matrix. The catalysed reaction is (2R)-3-phosphoglycerate + ATP = (2R)-3-phospho-glyceroyl phosphate + ADP. The enzyme catalyses L-seryl-[protein] + ATP = O-phospho-L-seryl-[protein] + ADP + H(+). Its pathway is carbohydrate degradation; glycolysis; pyruvate from D-glyceraldehyde 3-phosphate: step 2/5. Functionally, catalyzes one of the two ATP producing reactions in the glycolytic pathway via the reversible conversion of 1,3-diphosphoglycerate to 3-phosphoglycerate. Both L- and D- forms of purine and pyrimidine nucleotides can be used as substrates, but the activity is much lower on pyrimidines. In addition to its role as a glycolytic enzyme, it seems that PGK-1 acts as a polymerase alpha cofactor protein (primer recognition protein). Acts as a protein kinase when localized to the mitochondrion where it phosphorylates pyruvate dehydrogenase kinase PDK1 to inhibit pyruvate dehydrogenase complex activity and suppress the formation of acetyl-coenzyme A from pyruvate, and consequently inhibit oxidative phosphorylation and promote glycolysis. May play a role in sperm motility. This Macaca fascicularis (Crab-eating macaque) protein is Phosphoglycerate kinase 1 (PGK1).